Here is a 396-residue protein sequence, read N- to C-terminus: Exodeoxyribonuclease 7 large subunit (396 aa).

It belongs to the XseA family. Heterooligomer composed of large and small subunits.

Its subcellular location is the cytoplasm. It catalyses the reaction Exonucleolytic cleavage in either 5'- to 3'- or 3'- to 5'-direction to yield nucleoside 5'-phosphates.. In terms of biological role, bidirectionally degrades single-stranded DNA into large acid-insoluble oligonucleotides, which are then degraded further into small acid-soluble oligonucleotides. This chain is Exodeoxyribonuclease 7 large subunit, found in Clostridium tetani (strain Massachusetts / E88).